Here is a 184-residue protein sequence, read N- to C-terminus: Photosystem I assembly protein Ycf4 (184 aa).

2 consecutive transmembrane segments (helical) span residues V22–S42 and I57–S77.

It belongs to the Ycf4 family.

It localises to the plastid. The protein resides in the chloroplast thylakoid membrane. Seems to be required for the assembly of the photosystem I complex. The protein is Photosystem I assembly protein Ycf4 of Morus indica (Mulberry).